Reading from the N-terminus, the 113-residue chain is T cell receptor alpha variable 8-4 (113 aa).

An N-terminal signal peptide occupies residues 1-20 (MLLLLVPVLEVIFTLGGTRA). Positions 21 to 113 (QSVTQLGSHV…DAAEYFCAVS (93 aa)) constitute an Ig-like domain. Cysteines 42 and 110 form a disulfide. Asparagine 43 carries an N-linked (GlcNAc...) asparagine glycan.

As to quaternary structure, alpha-beta TR is a heterodimer composed of an alpha and beta chain; disulfide-linked. The alpha-beta TR is associated with the transmembrane signaling CD3 coreceptor proteins to form the TR-CD3 (TcR or TCR). The assembly of alpha-beta TR heterodimers with CD3 occurs in the endoplasmic reticulum where a single alpha-beta TR heterodimer associates with one CD3D-CD3E heterodimer, one CD3G-CD3E heterodimer and one CD247 homodimer forming a stable octameric structure. CD3D-CD3E and CD3G-CD3E heterodimers preferentially associate with TR alpha and TR beta chains, respectively. The association of the CD247 homodimer is the last step of TcR assembly in the endoplasmic reticulum and is required for transport to the cell surface.

The protein resides in the cell membrane. Functionally, v region of the variable domain of T cell receptor (TR) alpha chain that participates in the antigen recognition. Alpha-beta T cell receptors are antigen specific receptors which are essential to the immune response and are present on the cell surface of T lymphocytes. Recognize peptide-major histocompatibility (MH) (pMH) complexes that are displayed by antigen presenting cells (APC), a prerequisite for efficient T cell adaptive immunity against pathogens. Binding of alpha-beta TR to pMH complex initiates TR-CD3 clustering on the cell surface and intracellular activation of LCK that phosphorylates the ITAM motifs of CD3G, CD3D, CD3E and CD247 enabling the recruitment of ZAP70. In turn ZAP70 phosphorylates LAT, which recruits numerous signaling molecules to form the LAT signalosome. The LAT signalosome propagates signal branching to three major signaling pathways, the calcium, the mitogen-activated protein kinase (MAPK) kinase and the nuclear factor-kappa-B (NF-kB) pathways, leading to the mobilization of transcription factors that are critical for gene expression and essential for T cell growth and differentiation. The T cell repertoire is generated in the thymus, by V-(D)-J rearrangement. This repertoire is then shaped by intrathymic selection events to generate a peripheral T cell pool of self-MH restricted, non-autoaggressive T cells. Post-thymic interaction of alpha-beta TR with the pMH complexes shapes TR structural and functional avidity. This chain is T cell receptor alpha variable 8-4, found in Homo sapiens (Human).